Consider the following 137-residue polypeptide: MLVPKRVKHRREFRGKMRGEAKGGKEVAFGEYGLQATTSHWITNRQIEAARIAMTRYMKRGGKVWIKIFPHKSYTAKAIGVRMGSGKGAPEGWVAPVKRGKVMFEVAGVSEEIAREALRLASHKLPVKCKFVKREAE.

This sequence belongs to the universal ribosomal protein uL16 family. As to quaternary structure, part of the 50S ribosomal subunit.

Its function is as follows. Binds 23S rRNA and is also seen to make contacts with the A and possibly P site tRNAs. The sequence is that of Large ribosomal subunit protein uL16 from Streptococcus sanguinis (strain SK36).